A 329-amino-acid polypeptide reads, in one-letter code: L-lactate dehydrogenase (329 aa).

Residues Val-18, Glu-39, Lys-46, Tyr-71, and 85–86 contribute to the NAD(+) site; that span reads GA. Residues Gln-88 and Arg-94 each coordinate substrate. NAD(+)-binding positions include Ser-107, 124–126, and Ser-149; that span reads AAN. 126–129 is a substrate binding site; the sequence is NPVD. Substrate is bound at residue 154–157; the sequence is DSAR. Beta-D-fructose 1,6-bisphosphate-binding residues include Arg-159 and His-174. His-181 acts as the Proton acceptor in catalysis. Tyr-226 is subject to Phosphotyrosine. Thr-235 is a binding site for substrate.

This sequence belongs to the LDH/MDH superfamily. LDH family. In terms of assembly, homotetramer.

Its subcellular location is the cytoplasm. The enzyme catalyses (S)-lactate + NAD(+) = pyruvate + NADH + H(+). It functions in the pathway fermentation; pyruvate fermentation to lactate; (S)-lactate from pyruvate: step 1/1. Allosterically activated by fructose 1,6-bisphosphate (FBP). In terms of biological role, catalyzes the conversion of lactate to pyruvate. The sequence is that of L-lactate dehydrogenase from Streptococcus agalactiae serotype V (strain ATCC BAA-611 / 2603 V/R).